We begin with the raw amino-acid sequence, 110 residues long: UPF0473 protein SSP1146 (110 aa).

It belongs to the UPF0473 family.

The protein is UPF0473 protein SSP1146 of Staphylococcus saprophyticus subsp. saprophyticus (strain ATCC 15305 / DSM 20229 / NCIMB 8711 / NCTC 7292 / S-41).